The following is a 198-amino-acid chain: dITP/XTP pyrophosphatase (198 aa).

10-15 contacts substrate; it reads SGSDHK. Residues E43 and D72 each coordinate Mg(2+). Residue D72 is the Proton acceptor of the active site. Substrate is bound by residues S73, 154-157, K177, and 182-183; these read FGYD and HR.

It belongs to the HAM1 NTPase family. Homodimer. Requires Mg(2+) as cofactor.

It carries out the reaction XTP + H2O = XMP + diphosphate + H(+). The enzyme catalyses dITP + H2O = dIMP + diphosphate + H(+). It catalyses the reaction ITP + H2O = IMP + diphosphate + H(+). In terms of biological role, pyrophosphatase that catalyzes the hydrolysis of nucleoside triphosphates to their monophosphate derivatives, with a high preference for the non-canonical purine nucleotides XTP (xanthosine triphosphate), dITP (deoxyinosine triphosphate) and ITP. Seems to function as a house-cleaning enzyme that removes non-canonical purine nucleotides from the nucleotide pool, thus preventing their incorporation into DNA/RNA and avoiding chromosomal lesions. This chain is dITP/XTP pyrophosphatase, found in Leptospira biflexa serovar Patoc (strain Patoc 1 / Ames).